The chain runs to 186 residues: Ribosome-recycling factor (186 aa).

The protein belongs to the RRF family.

The protein localises to the cytoplasm. Responsible for the release of ribosomes from messenger RNA at the termination of protein biosynthesis. May increase the efficiency of translation by recycling ribosomes from one round of translation to another. The protein is Ribosome-recycling factor of Burkholderia mallei (strain NCTC 10247).